Reading from the N-terminus, the 161-residue chain is Endoribonuclease YbeY (161 aa).

Zn(2+) is bound by residues His-121, His-125, and His-131.

The protein belongs to the endoribonuclease YbeY family. The cofactor is Zn(2+).

Its subcellular location is the cytoplasm. Its function is as follows. Single strand-specific metallo-endoribonuclease involved in late-stage 70S ribosome quality control and in maturation of the 3' terminus of the 16S rRNA. The protein is Endoribonuclease YbeY of Stenotrophomonas maltophilia (strain K279a).